The chain runs to 136 residues: Cyclase aurE (136 aa).

The protein belongs to the aurE cyclase family.

Its pathway is polyketide biosynthesis. Cyclase; part of the gene cluster that mediates the biosynthesis of aurovertins, fungal polyketides that exhibit potent inhibition of adenosine triphosphate synthase. Tha biosynthesis starts with the HR-PKS aurA that selects propionate as the starter unit; synthesizes a hexa-ene chain through the repeated functions of the KR and DH domains in the first six iterations; selectively introduces three alpha-methyl substitutions at C4, C6, and C16 using the S-adensylmethionine-dependent cMET; and shuts off KR and DH in the last three iterations to afford a 1,3,5-triketo portion that can undergo intramolecular cyclization to yield the alpha-pyrone intermediate. AurE may act as a cyclase and enhances the rate of pyrone formation and product release of aurA. The methyltransferase aurB then methylates the C17 hydroxyl group. C17 methylation is required to initiate epoxidation by the downstream monooxygenase aurC. The monooxygenase aurC and the epoxide hydrolase aurD can iteratively transform the terminal triene portion of the methylated precursor into the dioxabicyclo[3.2.1]octane scaffold of aurovertin E. Epoxidation modifications of the precursor occur in two separate steps; bis-epoxidation of the two terminal olefins takes place first, followed by another epoxidation that occurs at C7-C8 after tetrahydrofuran formation. The O-acyltransferase aurG converts aurovertin E to aurovertin A. The chain is Cyclase aurE from Calcarisporium arbuscula (Dendryphion arbuscula).